Reading from the N-terminus, the 120-residue chain is MITKADKNATRKKRHARVRAKLTGTAERPRLNVFRSNQHIYAQVIDDVNGVTLVSASTLDKDLALNGTSNIEAATKVGESVAKRAVEXGVKEVVFDRGGYLYHGRVKALAEAAREAGLQF.

Belongs to the universal ribosomal protein uL18 family. Part of the 50S ribosomal subunit; part of the 5S rRNA/L5/L18/L25 subcomplex. Contacts the 5S and 23S rRNAs.

Functionally, this is one of the proteins that bind and probably mediate the attachment of the 5S RNA into the large ribosomal subunit, where it forms part of the central protuberance. The sequence is that of Large ribosomal subunit protein uL18 from Bacillus cereus (strain AH820).